Here is a 298-residue protein sequence, read N- to C-terminus: Adaptation to cold protein C (298 aa).

Interacts with the C-terminal extension of AtcJ. Also interacts with AtcB, but not with AtcA.

With respect to regulation, interaction with AtcJ stabilizes AtcC. Involved in cold adaptation. In Shewanella oneidensis (strain ATCC 700550 / JCM 31522 / CIP 106686 / LMG 19005 / NCIMB 14063 / MR-1), this protein is Adaptation to cold protein C.